We begin with the raw amino-acid sequence, 211 residues long: MSYAYLFKYIIIGDTGVGKSCLLLQFTDKRFQPVHDLTIGVEFGARMITIDNKPIKLQIWDTAGQESFRSITRSYYRGAAGALLVYDITRRETFNHLASWLEDARQHANANMTIMLIGNKCDLAHRRAVSTEEGEQFAKEHGLIFMEASAKTAQNVEEAFIKTAATIYKKIQDGVFDVSNESYGIKVGYGGIPGPSGGRDGSTSQGGGCCG.

Serine 2 carries the post-translational modification N-acetylserine. A GTP-binding site is contributed by 13–21; sequence GDTGVGKSC. An Effector region motif is present at residues 35–43; it reads HDLTIGVEF. Residues 61–65, 119–122, and 149–151 each bind GTP; these read DTAGQ, NKCD, and SAK. S-geranylgeranyl cysteine attachment occurs at residues cysteine 209 and cysteine 210.

This sequence belongs to the small GTPase superfamily. Rab family.

Its subcellular location is the cell membrane. Functionally, intracellular vesicle trafficking and protein transport. The sequence is that of Ras-related protein RABB1c (RABB1C) from Arabidopsis thaliana (Mouse-ear cress).